Reading from the N-terminus, the 356-residue chain is Stomatin-like protein 2, mitochondrial (356 aa).

Residues 1-28 (MLARAARGTGALLLRGSLLASGRAPRRA) constitute a mitochondrion transit peptide. The residue at position 17 (S17) is a Phosphoserine; by PKC/PRKCZ. A Phosphotyrosine modification is found at Y124. K145 carries the post-translational modification N6-acetyllysine; alternate. K145 is modified (N6-succinyllysine; alternate). The stretch at 215-252 (INVAEGKKQAQILASEAEKAEQINQAAGEASAVLAKAK) forms a coiled coil. At K233 the chain carries N6-acetyllysine. Residues 321–356 (KAPVPGTPDSLSSGSSRDVQGTDASLDEELDRVKMS) are disordered. T327 carries the post-translational modification Phosphothreonine. The segment covering 329–343 (DSLSSGSSRDVQGTD) has biased composition (polar residues). Residue S330 is modified to Phosphoserine.

It belongs to the band 7/mec-2 family. As to quaternary structure, forms homooligomers. Interacts with MFN2; may form heterooligomers. Interacts with CACNA2D2. Interacts with PHB1 and PHB2; recruits them to cardiolipin-enriched mitochondrial membranes and stabilizes them. Hyperphosphorylated at Ser-17 in some patients with monoclonal gammopathy of undetermined significance (MGUS), multiple myeloma (MM) and Waldenstrom macroglobulinemia due to impaired dephosphorylation by PP2A. In terms of tissue distribution, ubiquitously expressed at low levels. Expressed in lymphoid tissues (at protein level).

It localises to the cell membrane. It is found in the mitochondrion. The protein localises to the mitochondrion inner membrane. Its subcellular location is the mitochondrion intermembrane space. The protein resides in the membrane raft. It localises to the cytoplasm. It is found in the cytoskeleton. Mitochondrial protein that probably regulates the biogenesis and the activity of mitochondria. Stimulates cardiolipin biosynthesis, binds cardiolipin-enriched membranes where it recruits and stabilizes some proteins including prohibitin and may therefore act in the organization of functional microdomains in mitochondrial membranes. Through regulation of the mitochondrial function may play a role into several biological processes including cell migration, cell proliferation, T-cell activation, calcium homeostasis and cellular response to stress. May play a role in calcium homeostasis through negative regulation of calcium efflux from mitochondria. Required for mitochondrial hyperfusion a pro-survival cellular response to stress which results in increased ATP production by mitochondria. May also regulate the organization of functional domains at the plasma membrane and play a role in T-cell activation through association with the T-cell receptor signaling complex and its regulation. In Homo sapiens (Human), this protein is Stomatin-like protein 2, mitochondrial (STOML2).